Consider the following 165-residue polypeptide: Large ribosomal subunit protein uL10 (165 aa).

N6-acetyllysine is present on residues K37 and K105.

It belongs to the universal ribosomal protein uL10 family. In terms of assembly, part of the ribosomal stalk of the 50S ribosomal subunit. The N-terminus interacts with L11 and the large rRNA to form the base of the stalk. The C-terminus forms an elongated spine to which L12 dimers bind in a sequential fashion forming a multimeric L10(L12)X complex.

In terms of biological role, protein L10 is also a translational repressor protein. It controls the translation of the rplJL-rpoBC operon by binding to its mRNA. Its function is as follows. Forms part of the ribosomal stalk, playing a central role in the interaction of the ribosome with GTP-bound translation factors. The protein is Large ribosomal subunit protein uL10 (rplJ) of Escherichia coli O6:H1 (strain CFT073 / ATCC 700928 / UPEC).